The following is a 290-amino-acid chain: RIO-type serine/threonine-protein kinase Rio1 (290 aa).

The tract at residues 1–22 (MTDEFGMVEPQEGEAFGDEWEE) is disordered. Over residues 11 to 22 (QEGEAFGDEWEE) the composition is skewed to acidic residues. The region spanning 79 to 290 (DAFGGPISTG…DEGEDGDGDE (212 aa)) is the Protein kinase domain. Residues 85–93 (ISTGKEANV), lysine 107, glutamate 175, and valine 177 contribute to the ATP site. Residue aspartate 218 is the Proton acceptor of the active site. Asparagine 223 and aspartate 235 together coordinate Mg(2+). Residue aspartate 235 is the 4-aspartylphosphate intermediate of the active site.

The protein belongs to the protein kinase superfamily. RIO-type Ser/Thr kinase family. It depends on Mg(2+) as a cofactor. Requires Mn(2+) as cofactor. In terms of processing, autophosphorylated.

The catalysed reaction is L-seryl-[protein] + ATP = O-phospho-L-seryl-[protein] + ADP + H(+). The enzyme catalyses L-threonyl-[protein] + ATP = O-phospho-L-threonyl-[protein] + ADP + H(+). It catalyses the reaction ATP + H2O = ADP + phosphate + H(+). Serine/threonine-protein kinase that is able to autophosphorylate as well as to phosphorylate proteasome subunit alpha 1 (PsmA1) in vitro. Despite the protein kinase domain is proposed to act predominantly as an ATPase. The protein is RIO-type serine/threonine-protein kinase Rio1 (rio1) of Haloferax volcanii (strain ATCC 29605 / DSM 3757 / JCM 8879 / NBRC 14742 / NCIMB 2012 / VKM B-1768 / DS2) (Halobacterium volcanii).